The sequence spans 1271 residues: MSYKTVKYGKKAERRDYSKMLHQVELPNLIEIQTKSFEEFVETGIDELLKDISPIEGHNGDLKLYFEESSLSEPKYSTIETKIRDLNYSRQLSARVKLENAITGEVRESTVLMTDLPMMTPSGTFIINGAERVVVSQIVRSSGVYYTSELDKKINQIKYSAQVIPTRGAWIEFEQGSKEILYAKLDRSKKVPLTTFIRALGFTTKKDIEETFGRSSLITNTFEKDETKSPNEAVIDLYSKLRQGEKVPADAAREFIRMRLFDARRYDLAKVGRYKFIKKLDVLARAEGTYLANDIILDGEVLVAKDTHLTKEVIQILAQNRDAFRKQLITKENNLQNETADEILATTLPEGGNTLYAKENVVNLKTGEVLVKKNEAITEEVLTNLRKNRHSIDEKVIKYFLTEDVYKKESLRQGVISEILDVYVYDDAGDKSNVIRIIGSDQREDRIFVAVSDIVASISYFLNLYDGLGNVDDIDHLGNRRLRLIGELLKNQFRIGLARAEKNIKDKMSTTNFNDATPANVINMTPLVGAIKTFFGSSQLSQFMDQINPLAELTQKRRVSALGTGGIARDRAGVEVRDVHNSHYGRLCPIETPEGPSIGLISSLATYAKVDEYGFIKTPFLKVVQNGNETSVTKEVIYLTADEESDHVIASAATPMDEHGLFIESRVIARRNGETGIYDANEITAMDVSPKQVVSVATSSIPFLEHDDASRALMGANMQRQAVPLLQPTSPIVGTGVEYRAAKDSGAVVIAKNSGYVTYVDGKKIIITPEPTDTIKSGSKTLYKVGGEFDYGIAKKLYETKSVQNDQYDLVQFFRSNQDTLILQKPIVMQGEYVDAGDVIADGPSTENGELALGRNVTVAFMTWEGYNYEDAVIMSEDLVKHDVYTSIHIDEYEIETRDLKQANGKEEITREIPNVGQEAIKFLDERGIIVPGSEVKEGDILVGKITPKGVFEPTPSEKLIHAVIGDKAKEYRDSSLRVPHGGGGVVQSVQYFSKKNGDQLPTGVNEQIRVYIAKKRKITEGDKMAGRHGNKGVISKILPREDMPYLADGTYVDIMLNPLGVPSRMNIGQILEIHLGISAQKLGIKVASPVFDGVTNDELGAIMEEAGIAPDGKTTLYDGRTGEPYNNRISVGVMYMIKLSHMVDDKLHARNVGPYTLVTQQPMGGKAQNGGQRFGEMEVWALYAYGAAHTLQEMLTIKSDDMIGRNKVYYAITHGQEIPKASIPESFRVLTRELQALGLYVELIDANKGENEAIKSLVDNSSKGFNKGRF.

This sequence belongs to the RNA polymerase beta chain family. In terms of assembly, the RNAP catalytic core consists of 2 alpha, 1 beta, 1 beta' and 1 omega subunit. When a sigma factor is associated with the core the holoenzyme is formed, which can initiate transcription.

It carries out the reaction RNA(n) + a ribonucleoside 5'-triphosphate = RNA(n+1) + diphosphate. DNA-dependent RNA polymerase catalyzes the transcription of DNA into RNA using the four ribonucleoside triphosphates as substrates. The polypeptide is DNA-directed RNA polymerase subunit beta (Acholeplasma laidlawii (strain PG-8A)).